The following is a 313-amino-acid chain: Porphobilinogen deaminase (313 aa).

At cysteine 242 the chain carries S-(dipyrrolylmethanemethyl)cysteine.

It belongs to the HMBS family. Monomer. It depends on dipyrromethane as a cofactor.

The enzyme catalyses 4 porphobilinogen + H2O = hydroxymethylbilane + 4 NH4(+). The protein operates within porphyrin-containing compound metabolism; protoporphyrin-IX biosynthesis; coproporphyrinogen-III from 5-aminolevulinate: step 2/4. Tetrapolymerization of the monopyrrole PBG into the hydroxymethylbilane pre-uroporphyrinogen in several discrete steps. The sequence is that of Porphobilinogen deaminase from Klebsiella pneumoniae subsp. pneumoniae (strain ATCC 700721 / MGH 78578).